Here is a 178-residue protein sequence, read N- to C-terminus: Dual-action ribosomal maturation protein DarP (178 aa).

Belongs to the DarP family.

It localises to the cytoplasm. In terms of biological role, member of a network of 50S ribosomal subunit biogenesis factors which assembles along the 30S-50S interface, preventing incorrect 23S rRNA structures from forming. Promotes peptidyl transferase center (PTC) maturation. The chain is Dual-action ribosomal maturation protein DarP from Haemophilus influenzae (strain PittEE).